Reading from the N-terminus, the 226-residue chain is Nucleoside triphosphate pyrophosphatase (226 aa).

The active-site Proton acceptor is D79. The interval 204 to 226 is disordered; the sequence is WSRGTSTHPTPGTSATPKPNPGA. The span at 206-220 shows a compositional bias: polar residues; sequence RGTSTHPTPGTSATP.

This sequence belongs to the Maf family. A divalent metal cation serves as cofactor.

It localises to the cytoplasm. The enzyme catalyses a ribonucleoside 5'-triphosphate + H2O = a ribonucleoside 5'-phosphate + diphosphate + H(+). It catalyses the reaction a 2'-deoxyribonucleoside 5'-triphosphate + H2O = a 2'-deoxyribonucleoside 5'-phosphate + diphosphate + H(+). Its function is as follows. Nucleoside triphosphate pyrophosphatase. May have a dual role in cell division arrest and in preventing the incorporation of modified nucleotides into cellular nucleic acids. The polypeptide is Nucleoside triphosphate pyrophosphatase (Salinispora tropica (strain ATCC BAA-916 / DSM 44818 / JCM 13857 / NBRC 105044 / CNB-440)).